The following is a 35-amino-acid chain: Putative gene 58 protein (35 aa).

The sequence is that of Putative gene 58 protein (58) from Bacillus phage SP01 (Bacteriophage SP01).